We begin with the raw amino-acid sequence, 514 residues long: 2,3-bisphosphoglycerate-independent phosphoglycerate mutase (514 aa).

The Mn(2+) site is built by Asp-14 and Ser-64. Catalysis depends on Ser-64, which acts as the Phosphoserine intermediate. Residues His-125, 155-156 (RD), Arg-187, Arg-193, 263-266 (RADR), and Lys-336 contribute to the substrate site. Asp-403, His-407, Asp-444, His-445, and His-463 together coordinate Mn(2+).

The protein belongs to the BPG-independent phosphoglycerate mutase family. Monomer. Mn(2+) is required as a cofactor.

It catalyses the reaction (2R)-2-phosphoglycerate = (2R)-3-phosphoglycerate. It functions in the pathway carbohydrate degradation; glycolysis; pyruvate from D-glyceraldehyde 3-phosphate: step 3/5. Functionally, catalyzes the interconversion of 2-phosphoglycerate and 3-phosphoglycerate. The chain is 2,3-bisphosphoglycerate-independent phosphoglycerate mutase from Shewanella denitrificans (strain OS217 / ATCC BAA-1090 / DSM 15013).